Here is a 352-residue protein sequence, read N- to C-terminus: Molybdenum import ATP-binding protein ModC (352 aa).

The ABC transporter domain occupies 1–229 (MLELNFSQTL…SVMNPWLPKE (229 aa)). 31–38 (GVSGAGKT) provides a ligand contact to ATP. Residues 289–352 (QTSIRNVLRA…AQIKSVSITA (64 aa)) form the Mop domain.

Belongs to the ABC transporter superfamily. Molybdate importer (TC 3.A.1.8) family. As to quaternary structure, the complex is composed of two ATP-binding proteins (ModC), two transmembrane proteins (ModB) and a solute-binding protein (ModA).

The protein resides in the cell inner membrane. It carries out the reaction molybdate(out) + ATP + H2O = molybdate(in) + ADP + phosphate + H(+). Its function is as follows. Part of the ABC transporter complex ModABC involved in molybdenum import. Responsible for energy coupling to the transport system. This Escherichia coli O6:K15:H31 (strain 536 / UPEC) protein is Molybdenum import ATP-binding protein ModC.